The primary structure comprises 126 residues: Protein ApaG (126 aa).

Residues 2–126 (DISTPCIKCQ…FRLAIPNILN (125 aa)) form the ApaG domain.

In Vibrio atlanticus (strain LGP32) (Vibrio splendidus (strain Mel32)), this protein is Protein ApaG.